The chain runs to 129 residues: Small ribosomal subunit protein uS11 (129 aa).

It belongs to the universal ribosomal protein uS11 family. Part of the 30S ribosomal subunit. Interacts with proteins S7 and S18. Binds to IF-3.

Its function is as follows. Located on the platform of the 30S subunit, it bridges several disparate RNA helices of the 16S rRNA. Forms part of the Shine-Dalgarno cleft in the 70S ribosome. This Caulobacter sp. (strain K31) protein is Small ribosomal subunit protein uS11.